We begin with the raw amino-acid sequence, 293 residues long: Protein translocase subunit SecF (293 aa).

Helical transmembrane passes span 10 to 30 (ARIF…SMFA), 130 to 150 (VKSA…YITI), 158 to 178 (LAAI…FSVL), 185 to 205 (SFVA…IVVF), 244 to 264 (LFAV…FSFA), and 267 to 287 (VGFC…WLFF).

The protein belongs to the SecD/SecF family. SecF subfamily. As to quaternary structure, forms a complex with SecD. Part of the essential Sec protein translocation apparatus which comprises SecA, SecYEG and auxiliary proteins SecDF. Other proteins may also be involved.

It is found in the cell membrane. Part of the Sec protein translocase complex. Interacts with the SecYEG preprotein conducting channel. SecDF uses the proton motive force (PMF) to complete protein translocation after the ATP-dependent function of SecA. This chain is Protein translocase subunit SecF, found in Acidaminococcus fermentans (strain ATCC 25085 / DSM 20731 / CCUG 9996 / CIP 106432 / VR4).